A 554-amino-acid chain; its full sequence is Carboxylesterase 1C (554 aa).

The first 18 residues, 1-18 (MWLHALVWASLAVCPILG), serve as a signal peptide directing secretion. Residue Asn79 is glycosylated (N-linked (GlcNAc...) asparagine). Cys87 and Cys116 are joined by a disulfide. Residue Ser221 is the Acyl-ester intermediate of the active site. Residues Cys273 and Cys284 are joined by a disulfide bond. N-linked (GlcNAc...) asparagine glycans are attached at residues Asn274 and Asn304. Glu342 serves as the catalytic Charge relay system. N-linked (GlcNAc...) asparagine glycosylation is present at Asn377. His455 functions as the Charge relay system in the catalytic mechanism. Ser473 is subject to Phosphoserine. Residue Asn478 is glycosylated (N-linked (GlcNAc...) asparagine). Residues 551 to 554 (TEHK) carry the Prevents secretion from ER motif.

Belongs to the type-B carboxylesterase/lipase family. In terms of tissue distribution, expressed in lung, kidney and liver.

The protein resides in the endoplasmic reticulum lumen. The catalysed reaction is a carboxylic ester + H2O = an alcohol + a carboxylate + H(+). Involved in the detoxification of xenobiotics and in the activation of ester and amide prodrugs. Involved in the extracellular metabolism of lung surfactant. The protein is Carboxylesterase 1C (Ces1c) of Mus musculus (Mouse).